The following is a 348-amino-acid chain: Macrophage-capping protein (348 aa).

Methionine 1 bears the N-acetylmethionine mark. A Gelsolin-like 1 repeat occupies 27–75; that stretch reads EKLKPVPVAQENQGVFFSGDSYLVLHNGPEEVSHLHLWIGQQSSRDEQG. A Nuclear localization signal motif is present at residues 137 to 146; the sequence is KKLYQVKGKK. 2 Gelsolin-like repeats span residues 148-188 and 261-307; these read IRAT…LERN and MNLT…KERQ. Serine 337 carries the post-translational modification Phosphoserine.

Belongs to the villin/gelsolin family. As to quaternary structure, interacts with NUP62. Interacts with NUTF2 and RAN; involved in CAPG nuclear import. Post-translationally, the N-terminus is blocked. As to expression, macrophages and macrophage-like cells.

Its subcellular location is the nucleus. The protein localises to the cytoplasm. It is found in the melanosome. It localises to the cell projection. The protein resides in the lamellipodium. Its subcellular location is the ruffle. Its function is as follows. Calcium-sensitive protein which reversibly blocks the barbed ends of actin filaments but does not sever preformed actin filaments. May play an important role in macrophage function. May play a role in regulating cytoplasmic and/or nuclear structures through potential interactions with actin. May bind DNA. The polypeptide is Macrophage-capping protein (CAPG) (Homo sapiens (Human)).